The primary structure comprises 368 residues: MVVLGSTGSIGKNALKIAKKFKVGIEALSCGKNIALINEQIKVFKPKKVAILDSNDLNGLEPLGAKVFVGLEGIDAMIEECVSNLVINAIVGVAGLRASFKSLQTNKKLALANKESLVSAGHLLDISQITPIDSEHFGLWALLQNKALKPKSLIISASGGAFRDTPLELIPIQNAQNALKHPNWSMGSKITIDSASMVNKLFEILETYWLFGASLKIDALIERSSIVHALVEFEDNSIIAHLASADMQLPISYAINPKLASLSASIKPLDLYALSAIKFEPISMERYTLWRYKDLLLENPKLGVVLNASNEVAMEKFLNQEIAFGGLIKTISQALESYAKTPFKLSDLDEVLALDREVRERFGSVARV.

NADPH contacts are provided by threonine 7, glycine 8, serine 9, isoleucine 10, glycine 31, lysine 32, asparagine 33, and asparagine 113. Lysine 114 contacts 1-deoxy-D-xylulose 5-phosphate. Glutamate 115 serves as a coordination point for NADPH. Aspartate 133 contacts Mn(2+). Residues serine 134, glutamate 135, serine 158, and histidine 181 each coordinate 1-deoxy-D-xylulose 5-phosphate. Mn(2+) is bound at residue glutamate 135. Glycine 187 lines the NADPH pocket. Serine 194, asparagine 199, lysine 200, and glutamate 203 together coordinate 1-deoxy-D-xylulose 5-phosphate. Residue glutamate 203 participates in Mn(2+) binding.

Belongs to the DXR family. Mg(2+) serves as cofactor. It depends on Mn(2+) as a cofactor.

It catalyses the reaction 2-C-methyl-D-erythritol 4-phosphate + NADP(+) = 1-deoxy-D-xylulose 5-phosphate + NADPH + H(+). It participates in isoprenoid biosynthesis; isopentenyl diphosphate biosynthesis via DXP pathway; isopentenyl diphosphate from 1-deoxy-D-xylulose 5-phosphate: step 1/6. Functionally, catalyzes the NADPH-dependent rearrangement and reduction of 1-deoxy-D-xylulose-5-phosphate (DXP) to 2-C-methyl-D-erythritol 4-phosphate (MEP). In Helicobacter pylori (strain Shi470), this protein is 1-deoxy-D-xylulose 5-phosphate reductoisomerase.